Consider the following 540-residue polypeptide: Putative F-box/LRR-repeat protein At5g41840 (540 aa).

The 49-residue stretch at Gly-13–Ser-61 folds into the F-box domain. LRR repeat units follow at residues Phe-80–Cys-105, Arg-137–Phe-165, Tyr-189–Asn-214, Trp-217–Arg-242, Tyr-254–Asp-282, Ile-329–Thr-360, and Thr-361–Gly-386.

The polypeptide is Putative F-box/LRR-repeat protein At5g41840 (Arabidopsis thaliana (Mouse-ear cress)).